The chain runs to 314 residues: Nodulation protein D 1 (314 aa).

The HTH lysR-type domain occupies 6-63 (LDLNLLVALDALMTERNLTAAARSINLSQPAMSAAVGRLRTYFNDDLFTMVGRELVPT). Residues 23-42 (LTAAARSINLSQPAMSAAVG) constitute a DNA-binding region (H-T-H motif).

Belongs to the LysR transcriptional regulatory family.

Its function is as follows. NodD regulates the expression of the nodABCFE genes which encode other nodulation proteins. NodD is also a negative regulator of its own expression. Binds flavonoids as inducers. The sequence is that of Nodulation protein D 1 (nodD1) from Rhizobium leguminosarum bv. phaseoli.